The chain runs to 204 residues: Large ribosomal subunit protein eL15y (204 aa).

Residues 162 to 204 (RGLTSEGKKNRGLRGKGHNNHKNRPSRRATWKKNNSISLRRYR) form a disordered region. Residues 171 to 192 (NRGLRGKGHNNHKNRPSRRATW) are compositionally biased toward basic residues. The segment covering 193–204 (KKNNSISLRRYR) has biased composition (polar residues).

This sequence belongs to the eukaryotic ribosomal protein eL15 family.

The chain is Large ribosomal subunit protein eL15y (RPL15B) from Arabidopsis thaliana (Mouse-ear cress).